The following is a 76-amino-acid chain: Acyl carrier protein (76 aa).

Residues 1 to 75 (MVFEKIKALI…DIVFYITKNT (75 aa)) form the Carrier domain. An O-(pantetheine 4'-phosphoryl)serine modification is found at Ser35.

The protein belongs to the acyl carrier protein (ACP) family. Post-translationally, 4'-phosphopantetheine is transferred from CoA to a specific serine of apo-ACP by AcpS. This modification is essential for activity because fatty acids are bound in thioester linkage to the sulfhydryl of the prosthetic group.

Its subcellular location is the cytoplasm. It functions in the pathway lipid metabolism; fatty acid biosynthesis. Its function is as follows. Carrier of the growing fatty acid chain in fatty acid biosynthesis. This is Acyl carrier protein from Onion yellows phytoplasma (strain OY-M).